A 157-amino-acid chain; its full sequence is Ribosomal RNA large subunit methyltransferase H (157 aa).

S-adenosyl-L-methionine contacts are provided by residues Leu-73, Gly-105, and 124 to 129; that span reads LSQMTF.

It belongs to the RNA methyltransferase RlmH family. As to quaternary structure, homodimer.

It localises to the cytoplasm. The enzyme catalyses pseudouridine(1915) in 23S rRNA + S-adenosyl-L-methionine = N(3)-methylpseudouridine(1915) in 23S rRNA + S-adenosyl-L-homocysteine + H(+). In terms of biological role, specifically methylates the pseudouridine at position 1915 (m3Psi1915) in 23S rRNA. This is Ribosomal RNA large subunit methyltransferase H from Flavobacterium psychrophilum (strain ATCC 49511 / DSM 21280 / CIP 103535 / JIP02/86).